We begin with the raw amino-acid sequence, 735 residues long: DNA replication licensing factor mcm5-A (735 aa).

Residues 332–538 enclose the MCM domain; the sequence is IYETVAKSIA…RDMTLAKHVM (207 aa). Arginine 372 contacts ADP. The Arginine finger signature appears at 513 to 516; the sequence is SRFD.

The protein belongs to the MCM family. Component of the mcm2-7 complex (RLF-M). The complex forms a toroidal hexameric ring with the proposed subunit order mcm2-mcm6-mcm4-mcm7-mcm3-mcm5. The heterodimer of mmcm3/mcm5 interacts with mcm4, mmcm6, mcm7 and weakly with mcm2. Component of the CMG helicase complex, composed of the mcm2-7 complex, the GINS complex and cdc45.

The protein localises to the nucleus. It is found in the chromosome. It catalyses the reaction ATP + H2O = ADP + phosphate + H(+). In terms of biological role, acts as a component of the MCM2-7 complex (MCM complex) which is the replicative helicase essential for 'once per cell cycle' DNA replication initiation and elongation in eukaryotic cells. Core component of CDC45-MCM-GINS (CMG) helicase, the molecular machine that unwinds template DNA during replication, and around which the replisome is built. The active ATPase sites in the MCM2-7 ring are formed through the interaction surfaces of two neighboring subunits such that a critical structure of a conserved arginine finger motif is provided in trans relative to the ATP-binding site of the Walker A box of the adjacent subunit. The six ATPase active sites, however, are likely to contribute differentially to the complex helicase activity. The chain is DNA replication licensing factor mcm5-A (mcm5-a) from Xenopus laevis (African clawed frog).